The primary structure comprises 285 residues: Nucleotide-binding protein Glov_2163 (285 aa).

8 to 15 (GMSGSGKS) contacts ATP. 59 to 62 (DIRG) contributes to the GTP binding site.

The protein belongs to the RapZ-like family.

Displays ATPase and GTPase activities. The sequence is that of Nucleotide-binding protein Glov_2163 from Trichlorobacter lovleyi (strain ATCC BAA-1151 / DSM 17278 / SZ) (Geobacter lovleyi).